We begin with the raw amino-acid sequence, 214 residues long: Ras-related protein RABH1c (214 aa).

16-23 contributes to the GTP binding site; that stretch reads GDQSVGKT. The Effector region signature appears at 38-46; the sequence is YQPTIGIDF. GTP is bound by residues 64–68, 123–126, and 153–154; these read DTAGQ, NKTD, and SA. The disordered stretch occupies residues 194 to 214; sequence TSNSSQGEQQGGAGGGGGCSC. Positions 202–214 are enriched in gly residues; the sequence is QQGGAGGGGGCSC. Residues Cys-212 and Cys-214 are each lipidated (S-geranylgeranyl cysteine). Residue Cys-214 is modified to Cysteine methyl ester.

This sequence belongs to the small GTPase superfamily. Rab family. In terms of assembly, interacts with the C-terminus of GC5, but not with GC3.

It is found in the golgi apparatus membrane. The protein resides in the cytoplasm. The protein localises to the cytosol. Its function is as follows. Protein transport. Regulator of membrane traffic from the Golgi apparatus towards the endoplasmic reticulum (ER). The protein is Ras-related protein RABH1c (RABH1C) of Arabidopsis thaliana (Mouse-ear cress).